The chain runs to 838 residues: 1,4-alpha-glucan branching enzyme GlgB 1 (838 aa).

Over residues 1-11 (MIPRPPSDDRA) the composition is skewed to basic and acidic residues. Disordered regions lie at residues 1–98 (MIPR…VSKK) and 116–142 (PVSP…SVLG). Low complexity predominate over residues 29–57 (KKAAAAKKTAGKKATPAAKATAAKGAVTK). Residue D513 is the Nucleophile of the active site. The active-site Proton donor is the E566. Residues 793–822 (TDGARYGGSDVTNPHPVKPEPQGRHGRPAS) form a disordered region.

It belongs to the glycosyl hydrolase 13 family. GlgB subfamily. As to quaternary structure, monomer.

It carries out the reaction Transfers a segment of a (1-&gt;4)-alpha-D-glucan chain to a primary hydroxy group in a similar glucan chain.. Its pathway is glycan biosynthesis; glycogen biosynthesis. Its function is as follows. Catalyzes the formation of the alpha-1,6-glucosidic linkages in glycogen by scission of a 1,4-alpha-linked oligosaccharide from growing alpha-1,4-glucan chains and the subsequent attachment of the oligosaccharide to the alpha-1,6 position. This is 1,4-alpha-glucan branching enzyme GlgB 1 from Streptomyces avermitilis (strain ATCC 31267 / DSM 46492 / JCM 5070 / NBRC 14893 / NCIMB 12804 / NRRL 8165 / MA-4680).